Reading from the N-terminus, the 344-residue chain is Geranylgeranyl pyrophosphate synthase 10, mitochondrial (344 aa).

The N-terminal 40 residues, 1-40, are a transit peptide targeting the mitochondrion; that stretch reads MENREVFVYIVISIFRSLQFLFWRFRPRYNDVTSALTRPL. Residues K91, R94, and H123 each contribute to the isopentenyl diphosphate site. Positions 130 and 136 each coordinate Mg(2+). A dimethylallyl diphosphate-binding site is contributed by R141. R142 contacts isopentenyl diphosphate. 5 residues coordinate dimethylallyl diphosphate: K229, T230, Q267, K284, and K294.

It belongs to the FPP/GGPP synthase family. In terms of assembly, monomer. Mg(2+) serves as cofactor.

The protein resides in the mitochondrion. It catalyses the reaction isopentenyl diphosphate + dimethylallyl diphosphate = (2E)-geranyl diphosphate + diphosphate. The enzyme catalyses isopentenyl diphosphate + (2E)-geranyl diphosphate = (2E,6E)-farnesyl diphosphate + diphosphate. The catalysed reaction is isopentenyl diphosphate + (2E,6E)-farnesyl diphosphate = (2E,6E,10E)-geranylgeranyl diphosphate + diphosphate. The protein operates within isoprenoid biosynthesis; farnesyl diphosphate biosynthesis; farnesyl diphosphate from geranyl diphosphate and isopentenyl diphosphate: step 1/1. Its pathway is isoprenoid biosynthesis; geranyl diphosphate biosynthesis; geranyl diphosphate from dimethylallyl diphosphate and isopentenyl diphosphate: step 1/1. It participates in isoprenoid biosynthesis; geranylgeranyl diphosphate biosynthesis; geranylgeranyl diphosphate from farnesyl diphosphate and isopentenyl diphosphate: step 1/1. Functionally, catalyzes the trans-addition of the three molecules of IPP onto DMAPP to form geranylgeranyl pyrophosphate. This is Geranylgeranyl pyrophosphate synthase 10, mitochondrial from Arabidopsis thaliana (Mouse-ear cress).